A 398-amino-acid polypeptide reads, in one-letter code: Acetate kinase 1 (398 aa).

Asn9 contributes to the Mg(2+) binding site. Lys16 lines the ATP pocket. Residue Arg89 coordinates substrate. The active-site Proton donor/acceptor is Asp146. Residues 206–210 (HLGNG), 281–283 (DCR), and 329–333 (GIGEN) contribute to the ATP site. Mg(2+) is bound at residue Glu384.

Belongs to the acetokinase family. In terms of assembly, homodimer. Requires Mg(2+) as cofactor. Mn(2+) is required as a cofactor.

Its subcellular location is the cytoplasm. The catalysed reaction is acetate + ATP = acetyl phosphate + ADP. It functions in the pathway metabolic intermediate biosynthesis; acetyl-CoA biosynthesis; acetyl-CoA from acetate: step 1/2. Functionally, catalyzes the formation of acetyl phosphate from acetate and ATP. Can also catalyze the reverse reaction. In Vibrio vulnificus (strain CMCP6), this protein is Acetate kinase 1.